The primary structure comprises 120 residues: Phosphoribosyl-AMP cyclohydrolase (120 aa).

Residue Asp74 participates in Mg(2+) binding. Position 75 (Cys75) interacts with Zn(2+). Mg(2+)-binding residues include Asp76 and Asp78. Zn(2+) contacts are provided by Cys91 and Cys98.

It belongs to the PRA-CH family. Homodimer. The cofactor is Mg(2+). It depends on Zn(2+) as a cofactor.

The protein localises to the cytoplasm. The catalysed reaction is 1-(5-phospho-beta-D-ribosyl)-5'-AMP + H2O = 1-(5-phospho-beta-D-ribosyl)-5-[(5-phospho-beta-D-ribosylamino)methylideneamino]imidazole-4-carboxamide. It functions in the pathway amino-acid biosynthesis; L-histidine biosynthesis; L-histidine from 5-phospho-alpha-D-ribose 1-diphosphate: step 3/9. Catalyzes the hydrolysis of the adenine ring of phosphoribosyl-AMP. In Natronomonas pharaonis (strain ATCC 35678 / DSM 2160 / CIP 103997 / JCM 8858 / NBRC 14720 / NCIMB 2260 / Gabara) (Halobacterium pharaonis), this protein is Phosphoribosyl-AMP cyclohydrolase.